The following is a 37-amino-acid chain: Large ribosomal subunit protein bL36 (37 aa).

This sequence belongs to the bacterial ribosomal protein bL36 family.

This chain is Large ribosomal subunit protein bL36, found in Thermus thermophilus (strain ATCC BAA-163 / DSM 7039 / HB27).